Reading from the N-terminus, the 296-residue chain is 4-hydroxybenzoate octaprenyltransferase (296 aa).

The next 8 helical transmembrane spans lie at 22 to 42, 46 to 66, 99 to 121, 139 to 159, 163 to 183, 211 to 231, 238 to 258, and 270 to 290; these read PIGI…SALG, WIVV…GCVI, LFAG…LVIW, FFAI…PMAY, LGEV…WAVA, FDVA…GGIG, PAFY…YTWI, and FLHN…DFLV.

Belongs to the UbiA prenyltransferase family. The cofactor is Mg(2+).

It is found in the cell inner membrane. It carries out the reaction all-trans-octaprenyl diphosphate + 4-hydroxybenzoate = 4-hydroxy-3-(all-trans-octaprenyl)benzoate + diphosphate. It functions in the pathway cofactor biosynthesis; ubiquinone biosynthesis. Catalyzes the prenylation of para-hydroxybenzoate (PHB) with an all-trans polyprenyl group. Mediates the second step in the final reaction sequence of ubiquinone-8 (UQ-8) biosynthesis, which is the condensation of the polyisoprenoid side chain with PHB, generating the first membrane-bound Q intermediate 3-octaprenyl-4-hydroxybenzoate. This Dechloromonas aromatica (strain RCB) protein is 4-hydroxybenzoate octaprenyltransferase.